A 189-amino-acid chain; its full sequence is uncharacterized protein (189 aa).

The first 19 residues, methionine 1–alanine 19, serve as a signal peptide directing secretion. A disordered region spans residues proline 24–tyrosine 189. Over residues serine 25–glycine 69 the composition is skewed to low complexity. Over residues serine 70–alanine 101 the composition is skewed to gly residues. The span at valine 102 to glycine 142 shows a compositional bias: low complexity. A compositionally biased stretch (polar residues) spans phenylalanine 144–asparagine 157. Residues serine 165–serine 183 are compositionally biased toward gly residues.

This is an uncharacterized protein from Dictyostelium discoideum (Social amoeba).